The chain runs to 356 residues: MKVQQYRLDELTHLVKGELIGEGSLQFSNLASLENAEVNHLTFVNGEKHLDQAKVSRAGAYIVTAALKEHLPEKDNFIIVDNPYLAFAILTHVFDKKISSTGIESTAQIHPSAVISETAYIGHYVVIGENCVVGDNTVIQSHTKLDDNVEVGKDCFIDSHVTITGGSKLRDRVRIHSSTVIGGEGFGFAPYQGKWHRIAQLGSVLIGNDVRIGSNCSIDRGALDNTILEDGVIIDNLVQIAHNVHIGSNTAIAAKCGIAGSTKIGKNCILAGACGVAGHLSIADNVTLTGMSMVTKNISEAGTYSSGTGLFENNHWKKTIVRLRQLADVPLTQITKRLDHIQAQIESLESTFNLRK.

Residue histidine 242 is the Proton acceptor of the active site.

This sequence belongs to the transferase hexapeptide repeat family. LpxD subfamily. As to quaternary structure, homotrimer.

The catalysed reaction is a UDP-3-O-[(3R)-3-hydroxyacyl]-alpha-D-glucosamine + a (3R)-hydroxyacyl-[ACP] = a UDP-2-N,3-O-bis[(3R)-3-hydroxyacyl]-alpha-D-glucosamine + holo-[ACP] + H(+). Its pathway is bacterial outer membrane biogenesis; LPS lipid A biosynthesis. Its function is as follows. Catalyzes the N-acylation of UDP-3-O-acylglucosamine using 3-hydroxyacyl-ACP as the acyl donor. Is involved in the biosynthesis of lipid A, a phosphorylated glycolipid that anchors the lipopolysaccharide to the outer membrane of the cell. The chain is UDP-3-O-acylglucosamine N-acyltransferase from Acinetobacter baumannii (strain AB0057).